An 823-amino-acid chain; its full sequence is Apoptosis-resistant E3 ubiquitin protein ligase 1 (823 aa).

The Filamin repeat unit spans residues 52-158 (GNYLDPRSCK…VAYSPYYKIF (107 aa)). A disordered region spans residues 315-345 (PPMHMTSSQRRPSTAVDEEDEDSPSECHTPE). The tract at residues 483 to 789 (SISDWSKNFE…THSTLPTAHT (307 aa)) is interaction with SOCS2. Positions 483–823 (SISDWSKNFE…SEGCEGFGML (341 aa)) constitute an HECT domain. Cys790 serves as the catalytic Glycyl thioester intermediate.

As to quaternary structure, interacts with SOCS2. Interacts (via HECT domain) with HTRA2, DIABLO/SMAC and SEPTIN4; in the cytoplasm following induction of apoptosis. In terms of processing, autoubiquitinated in vitro in the presence of E2 enzyme UBE2D1/UBCH5A.

It catalyses the reaction S-ubiquitinyl-[E2 ubiquitin-conjugating enzyme]-L-cysteine + [acceptor protein]-L-lysine = [E2 ubiquitin-conjugating enzyme]-L-cysteine + N(6)-ubiquitinyl-[acceptor protein]-L-lysine.. It functions in the pathway protein modification; protein ubiquitination. Its function is as follows. E3 ubiquitin-protein ligase that catalyzes 'Lys-11'- or 'Lys-33'-linked polyubiquitin chains, with some preference for 'Lys-33' linkages. E3 ubiquitin-protein ligases accept ubiquitin from an E2 ubiquitin-conjugating enzyme in the form of a thioester and then directly transfers the ubiquitin to targeted substrates. Ubiquitinates SEPTIN4, DIABLO/SMAC and HTRA2 in vitro. Modulates pulmonary inflammation by targeting SOCS2 for ubiquitination and subsequent degradation by the proteasome. This is Apoptosis-resistant E3 ubiquitin protein ligase 1 from Homo sapiens (Human).